A 278-amino-acid chain; its full sequence is Putative pyruvate, phosphate dikinase regulatory protein (278 aa).

156–163 (GVSRTSKT) is a binding site for ADP.

The protein belongs to the pyruvate, phosphate/water dikinase regulatory protein family. PDRP subfamily.

The catalysed reaction is N(tele)-phospho-L-histidyl/L-threonyl-[pyruvate, phosphate dikinase] + ADP = N(tele)-phospho-L-histidyl/O-phospho-L-threonyl-[pyruvate, phosphate dikinase] + AMP + H(+). It catalyses the reaction N(tele)-phospho-L-histidyl/O-phospho-L-threonyl-[pyruvate, phosphate dikinase] + phosphate + H(+) = N(tele)-phospho-L-histidyl/L-threonyl-[pyruvate, phosphate dikinase] + diphosphate. Its function is as follows. Bifunctional serine/threonine kinase and phosphorylase involved in the regulation of the pyruvate, phosphate dikinase (PPDK) by catalyzing its phosphorylation/dephosphorylation. In Lactobacillus acidophilus (strain ATCC 700396 / NCK56 / N2 / NCFM), this protein is Putative pyruvate, phosphate dikinase regulatory protein.